Here is a 1399-residue protein sequence, read N- to C-terminus: DNA-directed RNA polymerase subunit beta' (1399 aa).

Residues Cys-70, Cys-72, Cys-85, and Cys-88 each coordinate Zn(2+). Mg(2+) is bound by residues Asp-460, Asp-462, and Asp-464. Residues Cys-814, Cys-888, Cys-895, and Cys-898 each contribute to the Zn(2+) site.

The protein belongs to the RNA polymerase beta' chain family. The RNAP catalytic core consists of 2 alpha, 1 beta, 1 beta' and 1 omega subunit. When a sigma factor is associated with the core the holoenzyme is formed, which can initiate transcription. It depends on Mg(2+) as a cofactor. Zn(2+) is required as a cofactor.

The enzyme catalyses RNA(n) + a ribonucleoside 5'-triphosphate = RNA(n+1) + diphosphate. Its function is as follows. DNA-dependent RNA polymerase catalyzes the transcription of DNA into RNA using the four ribonucleoside triphosphates as substrates. The chain is DNA-directed RNA polymerase subunit beta' from Pseudomonas putida (strain ATCC 47054 / DSM 6125 / CFBP 8728 / NCIMB 11950 / KT2440).